The sequence spans 220 residues: Endonuclease NucS (220 aa).

This sequence belongs to the NucS endonuclease family.

The protein localises to the cytoplasm. Cleaves both 3' and 5' ssDNA extremities of branched DNA structures. The chain is Endonuclease NucS from Frankia alni (strain DSM 45986 / CECT 9034 / ACN14a).